An 876-amino-acid chain; its full sequence is Leucine--tRNA ligase (876 aa).

The 'HIGH' region signature appears at 43–53 (PYPSGRIHIGH). The short motif at 632–636 (KMSKS) is the 'KMSKS' region element. Lysine 635 is an ATP binding site.

Belongs to the class-I aminoacyl-tRNA synthetase family.

The protein resides in the cytoplasm. It catalyses the reaction tRNA(Leu) + L-leucine + ATP = L-leucyl-tRNA(Leu) + AMP + diphosphate. The chain is Leucine--tRNA ligase from Allorhizobium ampelinum (strain ATCC BAA-846 / DSM 112012 / S4) (Agrobacterium vitis (strain S4)).